Here is a 576-residue protein sequence, read N- to C-terminus: Immunoglobulin mu heavy chain (576 aa).

Gln-1 carries the pyrrolidone carboxylic acid modification. Ig-like domains lie at 1–97 (QVTL…TYYC), 132–212 (PTLF…EHVC), 236–334 (PKVS…QNAS), 352–442 (PSFA…QTIS), and 452–553 (PDVY…RTVD). The interval 1–124 (QVTLTESGPA…VWGKGTTVTV (124 aa)) is variable (V) domain, involved in antigen recognition. Cystine bridges form between Cys-22–Cys-97, Cys-153–Cys-212, and Cys-259–Cys-320. Asn-74 and Asn-170 each carry an N-linked (GlcNAc...) asparagine glycan. The constant (C) domain stretch occupies residues 125–576 (SSGSASAPTL…VMSDTAGTCY (452 aa)). N-linked (GlcNAc...) asparagine glycosylation is found at Asn-332, Asn-395, and Asn-402. Intrachain disulfides connect Cys-367–Cys-426 and Cys-474–Cys-536. Asn-563 carries N-linked (GlcNAc...) asparagine glycosylation.

Immunoglobulins are composed of two identical heavy chains and two identical light chains; disulfide-linked. It is found almost exclusively as a homopentamer in the serum. Membrane-bound IgM molecules are non-covalently associated with heterodimer of CD79A and CD79B.

The protein localises to the secreted. It is found in the cell membrane. In terms of biological role, immunoglobulins, also known as antibodies, are membrane-bound or secreted glycoproteins produced by B lymphocytes. In the recognition phase of humoral immunity, the membrane-bound immunoglobulins serve as receptors which, upon binding of a specific antigen, trigger the clonal expansion and differentiation of B lymphocytes into immunoglobulins-secreting plasma cells. Secreted immunoglobulins mediate the effector phase of humoral immunity, which results in the elimination of bound antigens. The antigen binding site is formed by the variable domain of one heavy chain, together with that of its associated light chain. Thus, each immunoglobulin has two antigen binding sites with remarkable affinity for a particular antigen. The variable domains are assembled by a process called V-(D)-J rearrangement and can then be subjected to somatic hypermutations which, after exposure to antigen and selection, allow affinity maturation for a particular antigen. IgM antibodies play an important role in primary defense mechanisms. They have been shown to be involved in early recognition of external invaders like bacteria and viruses, cellular waste and modified self, as well as in recognition and elimination of precancerous and cancerous lesions. The membrane-bound form is found in the majority of normal B cells alongside with IgD. Membrane-bound IgM induces the phosphorylation of CD79A and CD79B by the Src family of protein tyrosine kinases. It may cause death of cells by apoptosis. It is also found in soluble form, which represents about 30% of the total serum immunoglobulins where it is found almost exclusively as a homopentamer. After the antigen binds to the B cell receptor, the secreted form is secreted in large amounts (, PubMed:16895553). This Homo sapiens (Human) protein is Immunoglobulin mu heavy chain.